Consider the following 344-residue polypeptide: L-rhamnose-proton symporter (344 aa).

Helical transmembrane passes span 4–24, 38–58, 68–88, 101–121, 137–157, 175–195, 214–234, 259–279, 290–310, and 323–343; these read AITM…CFYA, WSVG…ALLL, FSLS…IGNI, MGIG…TPII, TLLG…AGQL, LVLA…MNAA, LPSY…FCFI, VLLS…YAWG, ISWM…GLVL, and VLSL…MGMA.

This sequence belongs to the L-rhamnose transporter (TC 2.A.7.6) family.

Its subcellular location is the cell inner membrane. The enzyme catalyses L-rhamnopyranose(in) + H(+)(in) = L-rhamnopyranose(out) + H(+)(out). Functionally, uptake of L-rhamnose across the cytoplasmic membrane with the concomitant transport of protons into the cell (symport system). The sequence is that of L-rhamnose-proton symporter from Escherichia coli O17:K52:H18 (strain UMN026 / ExPEC).